A 194-amino-acid chain; its full sequence is Large ribosomal subunit protein bL9 (194 aa).

Residues 165 to 194 (PEDAEEAVANEEEAEAALLDDEDADEYEQG) form a disordered region. The segment covering 166–194 (EDAEEAVANEEEAEAALLDDEDADEYEQG) has biased composition (acidic residues).

Belongs to the bacterial ribosomal protein bL9 family.

Its function is as follows. Binds to the 23S rRNA. In Rhodospirillum rubrum (strain ATCC 11170 / ATH 1.1.1 / DSM 467 / LMG 4362 / NCIMB 8255 / S1), this protein is Large ribosomal subunit protein bL9.